The sequence spans 256 residues: Protein Ta0487 (256 aa).

This sequence belongs to the CinA family.

The protein is Protein Ta0487 of Thermoplasma acidophilum (strain ATCC 25905 / DSM 1728 / JCM 9062 / NBRC 15155 / AMRC-C165).